The sequence spans 189 residues: UPF0200 protein Smar_1234 (189 aa).

An ATP-binding site is contributed by 10-17; that stretch reads GMPGAGKS.

The protein belongs to the UPF0200 family.

The protein is UPF0200 protein Smar_1234 of Staphylothermus marinus (strain ATCC 43588 / DSM 3639 / JCM 9404 / F1).